Reading from the N-terminus, the 248-residue chain is Isoprenyl transferase (248 aa).

The active site involves Asp23. Residue Asp23 coordinates Mg(2+). Residues 24-27 (GNGR), Trp28, Arg36, His40, and 68-70 (STE) contribute to the substrate site. Residue Asn71 is the Proton acceptor of the active site. Substrate-binding positions include Trp72, Arg74, Arg185, and 191–193 (RIS). Residue Glu204 coordinates Mg(2+).

The protein belongs to the UPP synthase family. In terms of assembly, homodimer. Mg(2+) is required as a cofactor.

Catalyzes the condensation of isopentenyl diphosphate (IPP) with allylic pyrophosphates generating different type of terpenoids. This chain is Isoprenyl transferase, found in Neisseria meningitidis serogroup A / serotype 4A (strain DSM 15465 / Z2491).